A 150-amino-acid chain; its full sequence is D-aminoacyl-tRNA deacylase (150 aa).

The Gly-cisPro motif, important for rejection of L-amino acids signature appears at 138–139 (GP).

This sequence belongs to the DTD family. In terms of assembly, homodimer.

Its subcellular location is the cytoplasm. It carries out the reaction glycyl-tRNA(Ala) + H2O = tRNA(Ala) + glycine + H(+). It catalyses the reaction a D-aminoacyl-tRNA + H2O = a tRNA + a D-alpha-amino acid + H(+). Its function is as follows. An aminoacyl-tRNA editing enzyme that deacylates mischarged D-aminoacyl-tRNAs. Also deacylates mischarged glycyl-tRNA(Ala), protecting cells against glycine mischarging by AlaRS. Acts via tRNA-based rather than protein-based catalysis; rejects L-amino acids rather than detecting D-amino acids in the active site. By recycling D-aminoacyl-tRNA to D-amino acids and free tRNA molecules, this enzyme counteracts the toxicity associated with the formation of D-aminoacyl-tRNA entities in vivo and helps enforce protein L-homochirality. This Chlorobium phaeobacteroides (strain DSM 266 / SMG 266 / 2430) protein is D-aminoacyl-tRNA deacylase.